We begin with the raw amino-acid sequence, 57 residues long: Large ribosomal subunit protein bL32c (57 aa).

This sequence belongs to the bacterial ribosomal protein bL32 family.

It is found in the plastid. It localises to the chloroplast. The chain is Large ribosomal subunit protein bL32c from Liriodendron tulipifera (Tuliptree).